The primary structure comprises 877 residues: MNEKYAALKSNVSMLGHLLGNTIQEAHGDEILEKVETIRKLSKSARAGNQADRNNLIEEIKSLPDEQLTPVARAFNQFLNLTNIAEQYHTISRHCDAHVCEPDAINTLFAKLGQNGINKLDTAQAIRELNIELVLTAHPTEITRRTMINKLVKINECLSKLELSDLSYKERHKTEKRLEQLIAQSWHSDVIRKQRPTPLDEAKWGFAVVENSLWEAVPDFLRELDEKLKDYLDQGLPIDARPVHFSSWMGGDRDGNPFVTHTVTREVLLLSRWKAADLYLKDINELISELSMTKCNDTVRQLAGEDEHEPYRAILKQLRTLLSDTKEILDAKINGQKLAVKAPLQSVEQLWDPLFACYQSLRECGMSMIAEGSLLDTLRRVKAFGVHLVRLDIRQESTRHADVLSELTRYLGIGDYNHWSEQDKIAFLTNELASKRPLLPRDWQPSEPVKEVLDTCKIIAAQSREAFGAYVISMAKTASDVLAVHLLLQESGCPYRMDVCPLFETLDDLNNAEAVIKQLMSIDLYRGFIQNHQMVMIGYSDSAKDAGVMAAGWAQYHAMEALVNVAEQEGIELTLFHGRGGTIGRGGAPAHAALLSQPPKSLKGGLRVTEQGEMIRFKLGLPDVAVNSFNMYASAILEANLLPPPEPKQEWRDLMEVLSQVSCEAYRSVVRGEPDFVPYFRQATPELELGKLPLGSRPAKRNPNGGVESLRAIPWIFSWSQNRLLLPAWLGAGEAIQYSIDKGHQALLEEMCREWPFFSTRLGMLEMVYLKCNSEISRYYDERLADKSLLPLGDRLRDQLQSDIKAVLNVENNENLMQSDPWGQESIRLRNIYIEPLNMLQAELLYRTRQAGVVSEELEEALMVTIAGIAAGMRNTG.

Residues His138 and Lys544 contribute to the active site.

This sequence belongs to the PEPCase type 1 family. It depends on Mg(2+) as a cofactor.

It catalyses the reaction oxaloacetate + phosphate = phosphoenolpyruvate + hydrogencarbonate. In terms of biological role, forms oxaloacetate, a four-carbon dicarboxylic acid source for the tricarboxylic acid cycle. In Vibrio vulnificus (strain YJ016), this protein is Phosphoenolpyruvate carboxylase.